Here is a 214-residue protein sequence, read N- to C-terminus: MNVFRILGDLSHLLAMILLLVKIWRSKSCAGISGKSQILFALVFTTRYLDLFSNFISIYNTVMKVVFLLCAYVTVYMIYWKFRKTFDIENDTFRLEFLLVPVTGLSFLVNYSYTPMEVLWTFSIYLESVAILPQLFMISKTGEAETITTHYLFFLGLYRLLYLANWIRRYQTENFYDQISVVSGVVQTIFYCDFFYLYVTKVLKGKKLSLPVPV.

Residues 1–4 are Lumenal-facing; the sequence is MNVF. A helical membrane pass occupies residues 5–24; that stretch reads RILGDLSHLLAMILLLVKIW. The Cytoplasmic segment spans residues 25 to 32; it reads RSKSCAGI. The helical transmembrane segment at 33 to 52 threads the bilayer; that stretch reads SGKSQILFALVFTTRYLDLF. Positions 47 to 48 are interaction with the K-D-E-L motif on target proteins; that stretch reads RY. Topologically, residues 53 to 58 are lumenal; that stretch reads SNFISI. The chain crosses the membrane as a helical span at residues 59–79; it reads YNTVMKVVFLLCAYVTVYMIY. The Cytoplasmic portion of the chain corresponds to 80–92; sequence WKFRKTFDIENDT. Residues 93 to 110 form a helical membrane-spanning segment; that stretch reads FRLEFLLVPVTGLSFLVN. The Lumenal portion of the chain corresponds to 111-116; the sequence is YSYTPM. The helical transmembrane segment at 117-135 threads the bilayer; sequence EVLWTFSIYLESVAILPQL. The Cytoplasmic portion of the chain corresponds to 136 to 149; the sequence is FMISKTGEAETITT. Residues 150 to 168 traverse the membrane as a helical segment; that stretch reads HYLFFLGLYRLLYLANWIR. The interval 159-169 is interaction with the K-D-E-L motif on target proteins; sequence RLLYLANWIRR. Residues 169–178 are Lumenal-facing; the sequence is RYQTENFYDQ. Residues 179–199 form a helical membrane-spanning segment; that stretch reads ISVVSGVVQTIFYCDFFYLYV. At 200-214 the chain is on the cytoplasmic side; it reads TKVLKGKKLSLPVPV. Residues 204–207 are important for recycling of cargo proteins with the sequence motif K-D-E-L from the Golgi to the endoplasmic reticulum; that stretch reads KGKK.

The protein belongs to the ERD2 family.

The protein resides in the endoplasmic reticulum membrane. It is found in the golgi apparatus membrane. It localises to the cytoplasmic vesicle. The protein localises to the COPI-coated vesicle membrane. In terms of biological role, receptor for the C-terminal sequence motif K-D-E-L that is present on endoplasmic reticulum resident proteins and that mediates their recycling from the Golgi back to the endoplasmic reticulum. The sequence is that of ER lumen protein-retaining receptor 3 (Kdelr3) from Mus musculus (Mouse).